Consider the following 130-residue polypeptide: Large ribosomal subunit protein bL12 (130 aa).

It belongs to the bacterial ribosomal protein bL12 family. As to quaternary structure, homodimer. Part of the ribosomal stalk of the 50S ribosomal subunit. Forms a multimeric L10(L12)X complex, where L10 forms an elongated spine to which 2 to 4 L12 dimers bind in a sequential fashion. Binds GTP-bound translation factors.

Functionally, forms part of the ribosomal stalk which helps the ribosome interact with GTP-bound translation factors. Is thus essential for accurate translation. This Synechococcus sp. (strain RCC307) protein is Large ribosomal subunit protein bL12.